Consider the following 843-residue polypeptide: Protein P (843 aa).

Residues 1-177 are terminal protein domain (TP); sequence MPLSYQHFRK…FCGSPYSWEQ (177 aa). The interval 178-346 is spacer; the sequence is DLQHGRLVFQ…YCLCHIVNLI (169 aa). Disordered stretches follow at residues 220–258 and 292–319; these read KSRLGPQPPQGQLAGRPQGGSGSIRARVHPSPWGTVGVE and SKGHSSSGRAVELHHFPPNSSRSQSQGS. The segment covering 308–319 has biased composition (low complexity); sequence PPNSSRSQSQGS. The interval 347–690 is polymerase/reverse transcriptase domain (RT); sequence DDWGPCAEHG…YLNLYPVARQ (344 aa). Residues 357 to 600 form the Reverse transcriptase domain; sequence EHRIRTPRTP…YSLNFMGYVI (244 aa). Residues aspartate 429, aspartate 551, and aspartate 552 each contribute to the Mg(2+) site.

It belongs to the hepadnaviridae P protein family.

The catalysed reaction is DNA(n) + a 2'-deoxyribonucleoside 5'-triphosphate = DNA(n+1) + diphosphate. The enzyme catalyses Endonucleolytic cleavage to 5'-phosphomonoester.. Activated by host HSP70 and HSP40 in vitro to be able to bind the epsilon loop of the pgRNA. Because deletion of the RNase H region renders the protein partly chaperone-independent, the chaperones may be needed indirectly to relieve occlusion of the RNA-binding site by this domain. Inhibited by several reverse-transcriptase inhibitors: Lamivudine, Adefovir and Entecavir. Functionally, multifunctional enzyme that converts the viral RNA genome into dsDNA in viral cytoplasmic capsids. This enzyme displays a DNA polymerase activity that can copy either DNA or RNA templates, and a ribonuclease H (RNase H) activity that cleaves the RNA strand of RNA-DNA heteroduplexes in a partially processive 3'- to 5'-endonucleasic mode. Neo-synthesized pregenomic RNA (pgRNA) are encapsidated together with the P protein, and reverse-transcribed inside the nucleocapsid. Initiation of reverse-transcription occurs first by binding the epsilon loop on the pgRNA genome, and is initiated by protein priming, thereby the 5'-end of (-)DNA is covalently linked to P protein. Partial (+)DNA is synthesized from the (-)DNA template and generates the relaxed circular DNA (RC-DNA) genome. After budding and infection, the RC-DNA migrates in the nucleus, and is converted into a plasmid-like covalently closed circular DNA (cccDNA). The activity of P protein does not seem to be necessary for cccDNA generation, and is presumably released from (+)DNA by host nuclear DNA repair machinery. This chain is Protein P, found in Hepatitis B virus genotype B1 (isolate Japan/Yamagata-2/1998) (HBV-B).